A 1247-amino-acid chain; its full sequence is Protein jagged-2 (1247 aa).

An N-terminal signal peptide occupies residues 1–23; it reads MRARGWGRLPRRLLLLLVLCVQA. At 24–1082 the chain is on the extracellular side; that stretch reads TRPMGYFELQ…ETVVMGGSST (1059 aa). N-linked (GlcNAc...) asparagine glycosylation is present at Asn-153. Positions 196-240 constitute a DSL domain; sequence VRCDENYYSATCNKFCRPRNDFFGHYTCDQYGNKACMDGWMGKEC. Disulfide bonds link Cys-198–Cys-207, Cys-211–Cys-223, Cys-231–Cys-240, Cys-245–Cys-256, Cys-249–Cys-262, Cys-264–Cys-273, Cys-276–Cys-287, Cys-282–Cys-293, Cys-295–Cys-304, Cys-311–Cys-323, Cys-317–Cys-333, Cys-335–Cys-344, Cys-351–Cys-362, Cys-356–Cys-371, Cys-373–Cys-382, Cys-389–Cys-400, Cys-394–Cys-409, Cys-411–Cys-420, Cys-427–Cys-438, Cys-432–Cys-447, Cys-449–Cys-458, Cys-465–Cys-475, Cys-469–Cys-484, Cys-486–Cys-495, Cys-502–Cys-513, Cys-507–Cys-522, Cys-524–Cys-533, Cys-540–Cys-551, Cys-545–Cys-560, Cys-562–Cys-571, Cys-589–Cys-612, Cys-606–Cys-622, Cys-624–Cys-633, Cys-640–Cys-651, Cys-645–Cys-660, Cys-662–Cys-671, Cys-678–Cys-689, Cys-683–Cys-698, Cys-700–Cys-709, Cys-716–Cys-727, Cys-721–Cys-736, and Cys-738–Cys-747. The EGF-like 1 domain occupies 241–274; that stretch reads KEAVCKQGCNLLHGGCTVPGECRCSYGWQGKFCD. The 31-residue stretch at 275-305 folds into the EGF-like 2; atypical domain; sequence ECVPYPGCVHGSCVEPWHCDCETNWGGLLCD. EGF-like domains lie at 307–345 and 347–383; these read DLNY…KNCE and AEHA…PTCA. The EGF-like 5; calcium-binding domain occupies 385–421; the sequence is DIDECASNPCAAGGTCVDQVDGFECICPEQWVGATCQ. Residues 423–459 form the EGF-like 6; calcium-binding domain; that stretch reads DANECEGKPCLNAFSCKNLIGGYYCDCLPGWKGINCQ. One can recognise an EGF-like 7; calcium-binding domain in the interval 461–496; it reads NINDCHGQCQHGGTCKDLVNGYQCVCPRGFGGRHCE. EGF-like domains follow at residues 498 to 534 and 536 to 572; these read EYDK…LHCE and DMDL…KNCS. Asn-570 carries N-linked (GlcNAc...) asparagine glycosylation. One can recognise an EGF-like 10; atypical domain in the interval 574 to 634; sequence PRDTCPGGAC…DSGFTGTYCH (61 aa). N-linked (GlcNAc...) asparagine glycosylation occurs at Asn-619. The 37-residue stretch at 636 to 672 folds into the EGF-like 11; calcium-binding domain; the sequence is NIDDCMGQPCRNGGTCIDEVDSFRCFCPSGWEGELCD. Residues 674–710 enclose the EGF-like 12; calcium-binding domain; the sequence is NPNDCLPDPCHSRGRCYDLVNDFYCACDDGWKGKTCH. EGF-like domains lie at 712 to 748 and 751 to 787; these read REFQ…STCT and KNSS…RTCT. Asn-752 carries an N-linked (GlcNAc...) asparagine glycan. Cystine bridges form between Cys-755–Cys-766, Cys-760–Cys-775, Cys-777–Cys-786, Cys-793–Cys-804, Cys-798–Cys-813, Cys-815–Cys-824, Cys-831–Cys-842, Cys-836–Cys-851, and Cys-853–Cys-862. The region spanning 789-825 is the EGF-like 15; calcium-binding domain; it reads NTNDCNPLPCYNGGICVDGVNWFRCECAPGFAGPDCR. In terms of domain architecture, EGF-like 16; calcium-binding spans 827-863; sequence NIDECQSSPCAYGATCVDEINGYRCSCPPGRSGPRCQ. Asn-1060 is a glycosylation site (N-linked (GlcNAc...) asparagine). A helical transmembrane segment spans residues 1083 to 1103; sequence GLLVPVLCSVFSVLWLACVVI. The Cytoplasmic segment spans residues 1104 to 1247; it reads CVWWTRKRRK…TKDVRRAGRE (144 aa). Composition is skewed to basic and acidic residues over residues 1115–1125, 1192–1212, and 1230–1247; these read RERSRLPRDES, LSRG…KFTK, and VDNR…AGRE. Disordered stretches follow at residues 1115-1148 and 1167-1247; these read RERS…GSGL and PRRA…AGRE. Ser-1125 bears the Phosphoserine mark.

In terms of tissue distribution, found to be highest in fetal thymus, epidermis, foregut dorsal root ganglia and inner ear. In 2-weeK-old mice, abundant in heart, lung, thymus, skeletal muscle, brain and testis. Expression overlaps partially with Notch1 expression.

The protein localises to the membrane. In terms of biological role, putative Notch ligand involved in the mediation of Notch signaling. Plays an essential role during limb, craniofacial and thymic development. May be involved in myogenesis and in the development of peripheral and central nervous systems. The sequence is that of Protein jagged-2 (Jag2) from Mus musculus (Mouse).